A 477-amino-acid chain; its full sequence is Cyclin-A1-2 (477 aa).

Belongs to the cyclin family. Cyclin AB subfamily.

The chain is Cyclin-A1-2 (CYCA1-2) from Oryza sativa subsp. japonica (Rice).